A 458-amino-acid chain; its full sequence is tRNA-2-methylthio-N(6)-dimethylallyladenosine synthase (458 aa).

The MTTase N-terminal domain occupies 15–134 (KKVFIKTYGC…LPDLLEQTKQ (120 aa)). [4Fe-4S] cluster-binding residues include Cys-24, Cys-60, Cys-97, Cys-175, Cys-179, and Cys-182. Residues 161–393 (RKRGVSAFLT…QVLLLEQQNA (233 aa)) enclose the Radical SAM core domain. The TRAM domain occupies 396–457 (RSKIGQTTDV…SNSFVGEIAN (62 aa)).

This sequence belongs to the methylthiotransferase family. MiaB subfamily. As to quaternary structure, monomer. Requires [4Fe-4S] cluster as cofactor.

The protein localises to the cytoplasm. It catalyses the reaction N(6)-dimethylallyladenosine(37) in tRNA + (sulfur carrier)-SH + AH2 + 2 S-adenosyl-L-methionine = 2-methylsulfanyl-N(6)-dimethylallyladenosine(37) in tRNA + (sulfur carrier)-H + 5'-deoxyadenosine + L-methionine + A + S-adenosyl-L-homocysteine + 2 H(+). Catalyzes the methylthiolation of N6-(dimethylallyl)adenosine (i(6)A), leading to the formation of 2-methylthio-N6-(dimethylallyl)adenosine (ms(2)i(6)A) at position 37 in tRNAs that read codons beginning with uridine. This is tRNA-2-methylthio-N(6)-dimethylallyladenosine synthase from Bartonella quintana (strain Toulouse) (Rochalimaea quintana).